The chain runs to 190 residues: Calcium-binding protein NCS-1 (190 aa).

G2 carries N-myristoyl glycine lipidation. EF-hand domains lie at 40-58, 60-95, 96-131, and 144-179; these read SGHLNKSEFQKIYKQFFPF, DPSAFAEYVFNVFDADKNGYIDFKEFICALSVTSRG, ELNDKLIWAFQLYDLDNNGLISYDEMLRIVDAIYKM, and TPEKRVNKIFNMMDKNKDGQLTLEEFCEGSKRDPTI. 14 residues coordinate Ca(2+): D73, D75, N77, Y79, E84, D109, D111, N113, E120, D157, N159, D161, Q163, and E168.

The protein belongs to the recoverin family.

It localises to the membrane. Its function is as follows. Negatively regulates sporulation perhaps by controlling Ca(2+)-dependent desensitization of git3. The polypeptide is Calcium-binding protein NCS-1 (ncs1) (Schizosaccharomyces pombe (strain 972 / ATCC 24843) (Fission yeast)).